A 21-amino-acid polypeptide reads, in one-letter code: Protein YmjD (21 aa).

This is Protein YmjD (ymjD) from Escherichia coli (strain K12).